A 355-amino-acid chain; its full sequence is 3-isopropylmalate dehydrogenase (355 aa).

Arg98, Arg108, Arg132, and Asp223 together coordinate substrate. Residues Asp223, Asp247, and Asp251 each coordinate Mg(2+). Gly283–Asp295 lines the NAD(+) pocket.

The protein belongs to the isocitrate and isopropylmalate dehydrogenases family. LeuB type 2 subfamily. As to quaternary structure, homodimer. The cofactor is Mg(2+). Mn(2+) serves as cofactor.

The protein resides in the cytoplasm. It carries out the reaction (2R,3S)-3-isopropylmalate + NAD(+) = 4-methyl-2-oxopentanoate + CO2 + NADH. It participates in amino-acid biosynthesis; L-leucine biosynthesis; L-leucine from 3-methyl-2-oxobutanoate: step 3/4. In terms of biological role, catalyzes the oxidation of 3-carboxy-2-hydroxy-4-methylpentanoate (3-isopropylmalate) to 3-carboxy-4-methyl-2-oxopentanoate. The product decarboxylates to 4-methyl-2 oxopentanoate. The chain is 3-isopropylmalate dehydrogenase from Clavibacter sepedonicus (Clavibacter michiganensis subsp. sepedonicus).